A 242-amino-acid chain; its full sequence is Peptidase E (242 aa).

Catalysis depends on charge relay system residues Ser-123, Asp-138, and His-160.

The protein belongs to the peptidase S51 family.

Its subcellular location is the cytoplasm. The enzyme catalyses Dipeptidase E catalyzes the hydrolysis of dipeptides Asp-|-Xaa. It does not act on peptides with N-terminal Glu, Asn or Gln, nor does it cleave isoaspartyl peptides.. In terms of biological role, hydrolyzes dipeptides containing N-terminal aspartate residues. May play a role in allowing the cell to use peptide aspartate to spare carbon otherwise required for the synthesis of the aspartate family of amino acids. This is Peptidase E from Nostoc sp. (strain PCC 7120 / SAG 25.82 / UTEX 2576).